A 251-amino-acid polypeptide reads, in one-letter code: Pyridoxine 5'-phosphate synthase (251 aa).

Asn7 contacts 3-amino-2-oxopropyl phosphate. Residue Asp9–His10 participates in 1-deoxy-D-xylulose 5-phosphate binding. Arg18 lines the 3-amino-2-oxopropyl phosphate pocket. His43 (proton acceptor) is an active-site residue. Residues Arg45 and His50 each coordinate 1-deoxy-D-xylulose 5-phosphate. Glu70 (proton acceptor) is an active-site residue. 1-deoxy-D-xylulose 5-phosphate is bound at residue Thr100. The active-site Proton donor is His198. 3-amino-2-oxopropyl phosphate contacts are provided by residues Ala199 and Gly220–His221.

It belongs to the PNP synthase family. In terms of assembly, homooctamer; tetramer of dimers.

It is found in the cytoplasm. It carries out the reaction 3-amino-2-oxopropyl phosphate + 1-deoxy-D-xylulose 5-phosphate = pyridoxine 5'-phosphate + phosphate + 2 H2O + H(+). It participates in cofactor biosynthesis; pyridoxine 5'-phosphate biosynthesis; pyridoxine 5'-phosphate from D-erythrose 4-phosphate: step 5/5. In terms of biological role, catalyzes the complicated ring closure reaction between the two acyclic compounds 1-deoxy-D-xylulose-5-phosphate (DXP) and 3-amino-2-oxopropyl phosphate (1-amino-acetone-3-phosphate or AAP) to form pyridoxine 5'-phosphate (PNP) and inorganic phosphate. In Aromatoleum aromaticum (strain DSM 19018 / LMG 30748 / EbN1) (Azoarcus sp. (strain EbN1)), this protein is Pyridoxine 5'-phosphate synthase.